The primary structure comprises 142 residues: MMSFVSLLLVGILFHATQAEQLTKCEVFQKLKDLKDYGGVSLPEWVCTAFHTSGYDTQAIVQNNDSTEYGLFQINNKIWCKDDQNPHSRNICNISCDKFLDDDLTDDIVCAKKILDKVGINYWLAHKALCSEKLDQWLCEKL.

Positions 1–19 (MMSFVSLLLVGILFHATQA) are cleaved as a signal peptide. Positions 20–142 (EQLTKCEVFQ…KLDQWLCEKL (123 aa)) constitute a C-type lysozyme domain. Intrachain disulfides connect Cys-25-Cys-139, Cys-47-Cys-130, Cys-80-Cys-96, and Cys-92-Cys-110. Residues Asn-64 and Asn-93 are each glycosylated (N-linked (GlcNAc...) asparagine). 5 residues coordinate Ca(2+): Lys-98, Asp-101, Asp-103, Asp-106, and Asp-107.

Belongs to the glycosyl hydrolase 22 family. As to quaternary structure, lactose synthase (LS) is a heterodimer of a catalytic component, beta1,4-galactosyltransferase (beta4Gal-T1) and a regulatory component, alpha-lactalbumin (LA). As to expression, mammary gland specific. Secreted in milk.

It localises to the secreted. Its function is as follows. Regulatory subunit of lactose synthase, changes the substrate specificity of galactosyltransferase in the mammary gland making glucose a good acceptor substrate for this enzyme. This enables LS to synthesize lactose, the major carbohydrate component of milk. In other tissues, galactosyltransferase transfers galactose onto the N-acetylglucosamine of the oligosaccharide chains in glycoproteins. The protein is Alpha-lactalbumin (LALBA) of Capra hircus (Goat).